Consider the following 244-residue polypeptide: Cell division protein ZapD (244 aa).

The protein belongs to the ZapD family. In terms of assembly, interacts with FtsZ.

It localises to the cytoplasm. In terms of biological role, cell division factor that enhances FtsZ-ring assembly. Directly interacts with FtsZ and promotes bundling of FtsZ protofilaments, with a reduction in FtsZ GTPase activity. This is Cell division protein ZapD from Shewanella baltica (strain OS223).